The sequence spans 100 residues: uncharacterized protein (100 aa).

This is an uncharacterized protein from Borreliella burgdorferi (strain ATCC 35210 / DSM 4680 / CIP 102532 / B31) (Borrelia burgdorferi).